A 225-amino-acid polypeptide reads, in one-letter code: Suppressor of cytokine signaling 3 (225 aa).

The tract at residues 22 to 33 (LKTFSSKSEYQL) is kinase inhibitory region (KIR). The segment at 34 to 45 (VVNAVRKLQESG) is extended SH2 subdomain (ESS). One can recognise an SH2 domain in the interval 46 to 142 (FYWSAVTGGE…TPSFSLPPTE (97 aa)). The tract at residues 131 to 160 (PGTPSFSLPPTEPSSEVPEQPPAQALPGST) is disordered. Residues 177-224 (VLSRPLSSNVATLQHLCRKTVNGHLDSYEKVTQLPGPIREFLDQYDAP) form the SOCS box domain.

As to quaternary structure, interacts with multiple activated proteins of the tyrosine kinase signaling pathway including IGF1 receptor, insulin receptor and JAK2. Binding to JAK2 is mediated through the KIR and SH2 domains to a phosphorylated tyrosine residue within the JAK2 JH1 domain. Binds specific activated tyrosine residues of the leptin, EPO, IL12, GSCF and gp130 receptors. Interaction with CSNK1E stabilizes SOCS3 protein. Component of the probable ECS(SOCS3) E3 ubiquitin-protein ligase complex which contains CUL5, RNF7/RBX2, elongin BC complex and SOCS3. Interacts with CUL5, RNF7, ELOB and ELOC. Interacts with FGFR3. Interacts with INSR. Interacts with BCL10; this interaction may interfere with BCL10-binding with PELI2. Interacts with NOD2 (via CARD domain); the interaction promotes NOD2 degradation. In terms of processing, phosphorylated on tyrosine residues after stimulation by the cytokines, IL-2, EPO or IGF1. In terms of tissue distribution, low expression in lung, spleen and thymus. Expressed in Th2 but not TH1 cells.

It functions in the pathway protein modification; protein ubiquitination. In terms of biological role, SOCS family proteins form part of a classical negative feedback system that regulates cytokine signal transduction. SOCS3 is involved in negative regulation of cytokines that signal through the JAK/STAT pathway. Inhibits cytokine signal transduction by binding to tyrosine kinase receptors including IL6ST/gp130, LIF, erythropoietin, insulin, IL12, GCSF and leptin receptors. Binding to JAK2 inhibits its kinase activity and regulates IL6 signaling. Suppresses fetal liver erythropoiesis. Regulates onset and maintenance of allergic responses mediated by T-helper type 2 cells. Probable substrate recognition component of a SCF-like ECS (Elongin BC-CUL2/5-SOCS-box protein) E3 ubiquitin-protein ligase complex which mediates the ubiquitination and subsequent proteasomal degradation of target proteins. This is Suppressor of cytokine signaling 3 from Mus musculus (Mouse).